A 145-amino-acid polypeptide reads, in one-letter code: U20-hexatoxin-Hi1a (145 aa).

Positions 1–16 (MYQFLIIVILAAFVNG) are cleaved as a signal peptide. 2 Thyroglobulin type-1 domains span residues 20–73 (KTEC…GQPM) and 82–145 (ACEC…RLEC). Intrachain disulfides connect Cys23/Cys45, Cys56/Cys63, Cys85/Cys106, Cys117/Cys124, and Cys126/Cys145.

In terms of tissue distribution, expressed by the venom gland.

It is found in the secreted. Its function is as follows. Cysteine proteinase inhibitor. This chain is U20-hexatoxin-Hi1a, found in Hadronyche infensa (Fraser island funnel-web spider).